We begin with the raw amino-acid sequence, 598 residues long: Protein HIGH CHLOROPHYLL FLUORESCENCE PHENOTYPE 173, chloroplastic (598 aa).

Residues 1-79 constitute a chloroplast transit peptide; that stretch reads MVGSIVGSNM…ITTKESEETV (79 aa). The disordered stretch occupies residues 42–106; that stretch reads VIPRAQSSSS…PTLKLDDVNP (65 aa). Residues 73–84 are compositionally biased toward basic and acidic residues; the sequence is KESEETVAKKLD. Residues 87–97 are compositionally biased toward pro residues; that stretch reads PPSPQSPPSPP.

This sequence belongs to the NmrA-type oxidoreductase family. As to quaternary structure, component of a high molecular weight complex containing psbA mRNA, OHP1, OHP2 and HCF244, and PSII core proteins D1/D2, HCF136 and HCF173. Interacts with LPE1.

The protein resides in the plastid. It is found in the chloroplast membrane. Its subcellular location is the chloroplast thylakoid membrane. The protein localises to the chloroplast stroma. In terms of biological role, auxiliary factor required, together with HCF244, for the biogenesis of photosystem II (PSII), especially for the synthesis of the reaction center proteins (e.g. D1), via the regulation of the corresponding mRNA (e.g. psbA) translation initiation (ribosomal loading) and stabilization. The protein is Protein HIGH CHLOROPHYLL FLUORESCENCE PHENOTYPE 173, chloroplastic of Arabidopsis thaliana (Mouse-ear cress).